The sequence spans 235 residues: Small ribosomal subunit protein uS2 (235 aa).

Belongs to the universal ribosomal protein uS2 family.

The protein is Small ribosomal subunit protein uS2 (rpsB) of Geobacillus stearothermophilus (Bacillus stearothermophilus).